The primary structure comprises 437 residues: Serine hydroxymethyltransferase (437 aa).

(6S)-5,6,7,8-tetrahydrofolate is bound by residues L130 and 134–136 (GHL). K239 is modified (N6-(pyridoxal phosphate)lysine). 363-365 (TPF) provides a ligand contact to (6S)-5,6,7,8-tetrahydrofolate.

This sequence belongs to the SHMT family. Homodimer. It depends on pyridoxal 5'-phosphate as a cofactor.

It localises to the cytoplasm. The enzyme catalyses (6R)-5,10-methylene-5,6,7,8-tetrahydrofolate + glycine + H2O = (6S)-5,6,7,8-tetrahydrofolate + L-serine. It functions in the pathway one-carbon metabolism; tetrahydrofolate interconversion. The protein operates within amino-acid biosynthesis; glycine biosynthesis; glycine from L-serine: step 1/1. Catalyzes the reversible interconversion of serine and glycine with tetrahydrofolate (THF) serving as the one-carbon carrier. This reaction serves as the major source of one-carbon groups required for the biosynthesis of purines, thymidylate, methionine, and other important biomolecules. Also exhibits THF-independent aldolase activity toward beta-hydroxyamino acids, producing glycine and aldehydes, via a retro-aldol mechanism. The sequence is that of Serine hydroxymethyltransferase from Bartonella henselae (strain ATCC 49882 / DSM 28221 / CCUG 30454 / Houston 1) (Rochalimaea henselae).